A 326-amino-acid polypeptide reads, in one-letter code: Tumor necrosis factor soluble receptor (326 aa).

A signal peptide spans 1-16 (MFRLTLLLAYVACVYG). 4 TNFR-Cys repeats span residues 27 to 62 (KCRG…TVCS), 63 to 104 (PCKN…DRVC), 105 to 147 (DCSA…VLCT), and 148 to 186 (KCPR…TSCT). Intrachain disulfides connect cysteine 28-cysteine 39, cysteine 40-cysteine 53, cysteine 43-cysteine 61, cysteine 64-cysteine 79, cysteine 82-cysteine 96, cysteine 86-cysteine 104, cysteine 106-cysteine 120, cysteine 123-cysteine 146, cysteine 129-cysteine 149, and cysteine 164-cysteine 185. N-linked (GlcNAc...) asparagine; by host glycosylation occurs at asparagine 66. N-linked (GlcNAc...) asparagine; by host glycosylation is found at asparagine 181, asparagine 205, and asparagine 238.

Binds to TNF-alpha and beta. Probably prevents TNF to reach cellular target and thereby deampening the potential antiviral effects of the cytokine. The protein is Tumor necrosis factor soluble receptor of Oryctolagus cuniculus (Rabbit).